Here is a 165-residue protein sequence, read N- to C-terminus: Transcription elongation factor A protein-like 1 (165 aa).

Disordered regions lie at residues 1–66 and 89–124; these read MENS…LLPE and IPME…GDIH. The segment covering 33-60 has biased composition (acidic residues); the sequence is CSEDDQSSEDLSSEEQSSDEEFFPEELL. Residues 101–124 show a composition bias toward basic and acidic residues; sequence HKLEEGSFKERLARSRPQFRGDIH.

The protein belongs to the TFS-II family. TFA subfamily.

The protein localises to the nucleus. In terms of biological role, may be involved in transcriptional regulation. Modulates various viral and cellular promoters in a promoter context-dependent manner. Does not bind DNA directly. The protein is Transcription elongation factor A protein-like 1 of Rattus norvegicus (Rat).